The following is an 861-amino-acid chain: Leucine--tRNA ligase (861 aa).

The 'HIGH' region signature appears at 42 to 52 (PYPSGNLHMGH). The short motif at 620 to 624 (KMSKS) is the 'KMSKS' region element. Residue lysine 623 coordinates ATP.

This sequence belongs to the class-I aminoacyl-tRNA synthetase family.

The protein localises to the cytoplasm. The enzyme catalyses tRNA(Leu) + L-leucine + ATP = L-leucyl-tRNA(Leu) + AMP + diphosphate. The chain is Leucine--tRNA ligase from Baumannia cicadellinicola subsp. Homalodisca coagulata.